The chain runs to 264 residues: Signal peptidase I (264 aa).

The Cytoplasmic segment spans residues Met-1–Ser-18. Residues Phe-19–Val-39 form a helical membrane-spanning segment. The Extracellular portion of the chain corresponds to Pro-40 to Glu-264. Catalysis depends on residues Ser-43 and Lys-106.

The protein belongs to the peptidase S26 family.

It is found in the cell membrane. The catalysed reaction is Cleavage of hydrophobic, N-terminal signal or leader sequences from secreted and periplasmic proteins.. The sequence is that of Signal peptidase I (lepB) from Rickettsia prowazekii (strain Madrid E).